We begin with the raw amino-acid sequence, 335 residues long: Ketol-acid reductoisomerase (NAD(P)(+)) (335 aa).

Residues 5–185 (AKIYTDKDTT…GGTRAGAIET (181 aa)) enclose the KARI N-terminal Rossmann domain. NADP(+) contacts are provided by residues 28 to 31 (YGSQ), Arg-52, Ser-56, and 86 to 89 (DMAQ). Residue His-111 is part of the active site. Residue Gly-137 participates in NADP(+) binding. The region spanning 186–331 (TFKEETETDL…RRLKEIIERG (146 aa)) is the KARI C-terminal knotted domain. Positions 194, 198, 230, and 234 each coordinate Mg(2+). Ser-255 contributes to the substrate binding site. The tract at residues 301–335 (GSPTLSKGLEEMDKSLEEQTGRRLKEIIERGRPKS) is disordered. Positions 308 to 335 (GLEEMDKSLEEQTGRRLKEIIERGRPKS) are enriched in basic and acidic residues.

The protein belongs to the ketol-acid reductoisomerase family. Mg(2+) is required as a cofactor.

It catalyses the reaction (2R)-2,3-dihydroxy-3-methylbutanoate + NAD(+) = (2S)-2-acetolactate + NADH + H(+). It carries out the reaction (2R)-2,3-dihydroxy-3-methylbutanoate + NADP(+) = (2S)-2-acetolactate + NADPH + H(+). The protein operates within amino-acid biosynthesis; L-isoleucine biosynthesis; L-isoleucine from 2-oxobutanoate: step 2/4. It participates in amino-acid biosynthesis; L-valine biosynthesis; L-valine from pyruvate: step 2/4. Functionally, involved in the biosynthesis of branched-chain amino acids (BCAA). Catalyzes an alkyl-migration followed by a ketol-acid reduction of (S)-2-acetolactate (S2AL) to yield (R)-2,3-dihydroxy-isovalerate. In the isomerase reaction, S2AL is rearranged via a Mg-dependent methyl migration to produce 3-hydroxy-3-methyl-2-ketobutyrate (HMKB). In the reductase reaction, this 2-ketoacid undergoes a metal-dependent reduction by NADPH or NADH to yield (R)-2,3-dihydroxy-isovalerate. The polypeptide is Ketol-acid reductoisomerase (NAD(P)(+)) (Metallosphaera sedula (strain ATCC 51363 / DSM 5348 / JCM 9185 / NBRC 15509 / TH2)).